The chain runs to 315 residues: Olfactory receptor 8J3 (315 aa).

The Extracellular portion of the chain corresponds to 1-25 (MAPENFTRVTEFILTGVSSCPELQI). N-linked (GlcNAc...) asparagine glycosylation occurs at N5. The helical transmembrane segment at 26–46 (PLFLVFLVLYVLTMAGNLGII) threads the bilayer. The Cytoplasmic portion of the chain corresponds to 47-54 (TLTSVDSR). A helical transmembrane segment spans residues 55-75 (LQNPMYFFLRHLAIINLGNST). The Extracellular segment spans residues 76–99 (VIAPKMLMNFLVKKKTTSFYECAT). A disulfide bond links C97 and C189. A helical membrane pass occupies residues 100 to 120 (QLGGFLFFIVSEVMMLAVMAY). Residues 121–139 (DRYVAICNPLLYMVVVSRR) lie on the Cytoplasmic side of the membrane. The helical transmembrane segment at 140-160 (LCLLLVSLTYLYGFSTAIVVS) threads the bilayer. Topologically, residues 161–197 (PCIFSVSYCSSNIINHFYCDIAPLLALSCSDTYIPET) are extracellular. Residues 198–217 (IVFISAATNLVFSMITVLVS) form a helical membrane-spanning segment. At 218–237 (YFNIVLSILRIRSPEGRKKA) the chain is on the cytoplasmic side. The chain crosses the membrane as a helical span at residues 238-258 (FSTCASHMIAVTVFYGTMLFM). Topologically, residues 259-271 (YLQPQTNHSLDTD) are extracellular. N265 is a glycosylation site (N-linked (GlcNAc...) asparagine). The helical transmembrane segment at 272 to 292 (KMASVFYTLVIPMLNPLIYSL) threads the bilayer. Topologically, residues 293–315 (RNNDVNVALKKFMENPCYSFKSM) are cytoplasmic.

Belongs to the G-protein coupled receptor 1 family.

It is found in the cell membrane. In terms of biological role, odorant receptor. The sequence is that of Olfactory receptor 8J3 (OR8J3) from Homo sapiens (Human).